The chain runs to 157 residues: Small ribosomal subunit protein uS7 (157 aa).

It belongs to the universal ribosomal protein uS7 family. Part of the 30S ribosomal subunit. Contacts proteins S9 and S11.

Functionally, one of the primary rRNA binding proteins, it binds directly to 16S rRNA where it nucleates assembly of the head domain of the 30S subunit. Is located at the subunit interface close to the decoding center, probably blocks exit of the E-site tRNA. This chain is Small ribosomal subunit protein uS7, found in Phenylobacterium zucineum (strain HLK1).